A 399-amino-acid chain; its full sequence is C-type lectin domain family 4 member M (399 aa).

Topologically, residues 1 to 49 (MSDSKEQRVQPLGLLEEDPTTSGIRLFPRDFQFQQTHGHKSSTGCLGHG) are cytoplasmic. Residues 14-15 (LL) carry the Endocytosis signal motif. Residues 50–70 (PLVLQLLSFTLLAGFLVAILV) traverse the membrane as a helical; Signal-anchor for type II membrane protein segment. Topologically, residues 71-399 (QVYKGPSSLS…KKPTACFRDE (329 aa)) are extracellular. N-linked (GlcNAc...) asparagine glycosylation is present at Asn92. 7 tandem repeats follow at residues 108–130 (KLQE…PEKS), 131–153 (RLQE…PENS), 154–176 (RLQE…PEKS), 177–199 (KQQE…PEKS), 200–222 (KQQE…PEKS), 223–245 (KQQE…PDQS), and 246–268 (KQQQ…CCRC). Residues 108-269 (KLQEIYQELT…AFERLCCRCP (162 aa)) form a 7 X approximate tandem repeats region. Intrachain disulfides connect Cys265/Cys395, Cys268/Cys279, Cys296/Cys389, and Cys368/Cys381. Positions 274–390 (FFQGNCYFIS…CNVDNYWICK (117 aa)) constitute a C-type lectin domain. Residues Glu359, Asn361, Ser363, Glu366, Asn377, and Asp378 each coordinate Ca(2+). Asn361 carries N-linked (GlcNAc...) asparagine glycosylation.

Homotetramer.

The protein localises to the membrane. Functionally, probable pathogen-recognition receptor involved in peripheral immune surveillance in liver. May mediate the endocytosis of pathogens which are subsequently degraded in lysosomal compartments. Probably recognizes in a calcium-dependent manner high mannose N-linked oligosaccharides in a variety of pathogen antigens. Is a receptor for ICAM3, probably by binding to mannose-like carbohydrates. This is C-type lectin domain family 4 member M (CLEC4M) from Nomascus concolor (Black crested gibbon).